A 303-amino-acid chain; its full sequence is Eukaryotic translation initiation factor 3 subunit F (303 aa).

A compositionally biased stretch (polar residues) spans 1–10; the sequence is MSLDTSSSAI. The interval 1-25 is disordered; the sequence is MSLDTSSSAIHLQLPPTSSSLRPPS. Positions 12–25 are enriched in low complexity; it reads LQLPPTSSSLRPPS. The 139-residue stretch at 27 to 165 folds into the MPN domain; the sequence is ITVHPSVIAQ…VKGWVSQPLG (139 aa).

Belongs to the eIF-3 subunit F family. As to quaternary structure, component of the eukaryotic translation initiation factor 3 (eIF-3) complex.

The protein resides in the cytoplasm. In terms of biological role, component of the eukaryotic translation initiation factor 3 (eIF-3) complex, which is involved in protein synthesis of a specialized repertoire of mRNAs and, together with other initiation factors, stimulates binding of mRNA and methionyl-tRNAi to the 40S ribosome. The eIF-3 complex specifically targets and initiates translation of a subset of mRNAs involved in cell proliferation. This is Eukaryotic translation initiation factor 3 subunit F from Cryptococcus neoformans var. neoformans serotype D (strain B-3501A) (Filobasidiella neoformans).